A 509-amino-acid chain; its full sequence is Steroid 17-alpha-hydroxylase/17,20 lyase (509 aa).

Asn202 is a binding site for substrate. Residue Cys442 coordinates heme.

The protein belongs to the cytochrome P450 family. It depends on heme as a cofactor.

It is found in the endoplasmic reticulum membrane. The protein resides in the microsome membrane. The enzyme catalyses a C21-steroid + reduced [NADPH--hemoprotein reductase] + O2 = a 17alpha-hydroxy-C21-steroid + oxidized [NADPH--hemoprotein reductase] + H2O + H(+). It catalyses the reaction progesterone + reduced [NADPH--hemoprotein reductase] + O2 = 17alpha-hydroxyprogesterone + oxidized [NADPH--hemoprotein reductase] + H2O + H(+). It carries out the reaction pregnenolone + reduced [NADPH--hemoprotein reductase] + O2 = 17alpha-hydroxypregnenolone + oxidized [NADPH--hemoprotein reductase] + H2O + H(+). The catalysed reaction is 17alpha-hydroxyprogesterone + reduced [NADPH--hemoprotein reductase] + O2 = androst-4-ene-3,17-dione + acetate + oxidized [NADPH--hemoprotein reductase] + H2O + 2 H(+). The enzyme catalyses 17alpha-hydroxyprogesterone + reduced [NADPH--hemoprotein reductase] + O2 = 16alpha,17alpha-dihydroxyprogesterone + oxidized [NADPH--hemoprotein reductase] + H2O + H(+). It catalyses the reaction 16alpha,17alpha-dihydroxyprogesterone + reduced [NADPH--hemoprotein reductase] + O2 = 6beta,16alpha,17alpha-trihydroxyprogesterone + oxidized [NADPH--hemoprotein reductase] + H2O + H(+). It carries out the reaction 17alpha-hydroxypregnenolone + reduced [NADPH--hemoprotein reductase] + O2 = 3beta-hydroxyandrost-5-en-17-one + acetate + oxidized [NADPH--hemoprotein reductase] + H2O + 2 H(+). The catalysed reaction is 16alpha,17alpha-dihydroxypregnenolone + reduced [NADPH--hemoprotein reductase] + O2 = 3beta,16alpha-dihydroxy-androst-5-en-17-one + acetate + oxidized [NADPH--hemoprotein reductase] + H2O + 2 H(+). The enzyme catalyses 3beta-hydroxyandrost-5-en-17-one + reduced [NADPH--hemoprotein reductase] + O2 = 3beta,16alpha-dihydroxy-androst-5-en-17-one + oxidized [NADPH--hemoprotein reductase] + H2O + H(+). It catalyses the reaction androst-4-ene-3,17-dione + reduced [NADPH--hemoprotein reductase] + O2 = 16alpha-hydroxyandrost-4-ene-3,17-dione + oxidized [NADPH--hemoprotein reductase] + H2O + H(+). Its pathway is steroid hormone biosynthesis. It functions in the pathway steroid biosynthesis; glucocorticoid biosynthesis. Regulated predominantly by intracellular cAMP levels. The 17,20-lyase activity is stimulated by cytochrome b5, which acts as an allosteric effector increasing the Vmax of the lyase activity. In terms of biological role, a cytochrome P450 monooxygenase involved in corticoid and androgen biosynthesis. Catalyzes 17-alpha hydroxylation of C21 steroids, which is common for both pathways. A second oxidative step, required only for androgen synthesis, involves an acyl-carbon cleavage. The 17-alpha hydroxy intermediates, as part of adrenal glucocorticoids biosynthesis pathway, are precursors of cortisol. Hydroxylates steroid hormones, pregnenolone and progesterone to form 17-alpha hydroxy metabolites, followed by the cleavage of the C17-C20 bond to form C19 steroids, dehydroepiandrosterone (DHEA) and androstenedione. Has 16-alpha hydroxylase activity. Catalyzes 16-alpha hydroxylation of 17-alpha hydroxy pregnenolone, followed by the cleavage of the C17-C20 bond to form 16-alpha-hydroxy DHEA. Also 16-alpha hydroxylates androgens, relevant for estriol synthesis. Mechanistically, uses molecular oxygen inserting one oxygen atom into a substrate, and reducing the second into a water molecule, with two electrons provided by NADPH via cytochrome P450 reductase (CPR; NADPH-ferrihemoprotein reductase). In Bison bison (American bison), this protein is Steroid 17-alpha-hydroxylase/17,20 lyase (CYP17A1).